We begin with the raw amino-acid sequence, 563 residues long: Efflux pump FUS6 (563 aa).

The segment at 1 to 30 is disordered; that stretch reads MPQPDKMAAVNNAMPQPAPEKSLSSDPQPE. 5 helical membrane-spanning segments follow: residues 39–59, 75–95, 105–125, 138–158, and 167–187; these read WLIFVAIALTTFLAALDTSII, LYVWIIDAYLLASTATIPIFA, SLTLIAVCIFTLGSGLCGGAH, GIGGGGILTMSEIVVCDMVSI, and IIGGVWAIAAVVAPVMGGAFA. Asn-189 carries N-linked (GlcNAc...) asparagine glycosylation. The next 3 helical transmembrane spans lie at 194-214, 233-253, and 261-281; these read WIFYINLPIAGVSLVALGLFL, WGGSVLLIGSVTSIVLALSWG, and GWQTIVPLVIGLLALVAFFAY. N-linked (GlcNAc...) asparagine glycosylation occurs at Asn-299. 6 helical membrane-spanning segments follow: residues 305 to 325, 340 to 360, 368 to 388, 401 to 421, 433 to 453, and 509 to 529; these read LLVISFIHSLLLYWVCYFLPV, VMLFPIACTSAPAGVAAGITI, VWHFTGFVLMSIACGLFTLLD, ILFGVGTGTVFTSTLPPILAS, AWTFIRNFGSIWGVAIPAAVF, and KVVWQVSLAFCLLGFILCFFV. Residue Asn-553 is glycosylated (N-linked (GlcNAc...) asparagine).

The protein belongs to the major facilitator superfamily. TCR/Tet family.

The protein resides in the membrane. Efflux pump; part of the gene cluster that mediates the biosynthesis of the mycotoxin fusarin C. Within the cluster, FUS1, FUS2, FUS8 and FUS9 are sufficient for fusarin production. The other FUS cluster members are not essential for fusarin C biosynthesis. The sequence is that of Efflux pump FUS6 from Gibberella moniliformis (strain M3125 / FGSC 7600) (Maize ear and stalk rot fungus).